We begin with the raw amino-acid sequence, 156 residues long: Small ribosomal subunit protein uS7c (156 aa).

It belongs to the universal ribosomal protein uS7 family. In terms of assembly, part of the 30S ribosomal subunit.

The protein resides in the plastid. It localises to the chloroplast. Its function is as follows. One of the primary rRNA binding proteins, it binds directly to 16S rRNA where it nucleates assembly of the head domain of the 30S subunit. The protein is Small ribosomal subunit protein uS7c (rps7) of Nephroselmis olivacea (Green alga).